The sequence spans 451 residues: Phosphoglucosamine mutase (451 aa).

The active-site Phosphoserine intermediate is the serine 102. Residues serine 102, aspartate 243, aspartate 245, and aspartate 247 each coordinate Mg(2+). The residue at position 102 (serine 102) is a Phosphoserine.

The protein belongs to the phosphohexose mutase family. Mg(2+) is required as a cofactor. In terms of processing, activated by phosphorylation.

It catalyses the reaction alpha-D-glucosamine 1-phosphate = D-glucosamine 6-phosphate. Its function is as follows. Catalyzes the conversion of glucosamine-6-phosphate to glucosamine-1-phosphate. This is Phosphoglucosamine mutase from Chelativorans sp. (strain BNC1).